The sequence spans 470 residues: UDP-N-acetylmuramoylalanine--D-glutamate ligase (470 aa).

120–126 (GSNGKTT) contributes to the ATP binding site.

The protein belongs to the MurCDEF family.

Its subcellular location is the cytoplasm. It catalyses the reaction UDP-N-acetyl-alpha-D-muramoyl-L-alanine + D-glutamate + ATP = UDP-N-acetyl-alpha-D-muramoyl-L-alanyl-D-glutamate + ADP + phosphate + H(+). It functions in the pathway cell wall biogenesis; peptidoglycan biosynthesis. Its function is as follows. Cell wall formation. Catalyzes the addition of glutamate to the nucleotide precursor UDP-N-acetylmuramoyl-L-alanine (UMA). In Nitrosomonas eutropha (strain DSM 101675 / C91 / Nm57), this protein is UDP-N-acetylmuramoylalanine--D-glutamate ligase.